Reading from the N-terminus, the 632-residue chain is tRNA uridine 5-carboxymethylaminomethyl modification enzyme MnmG (632 aa).

An FAD-binding site is contributed by 15-20 (GAGHAG). Positions 205–231 (PRVDGNTIDYSKTQEEPGDKEPRHFSY) are disordered. The span at 216–228 (KTQEEPGDKEPRH) shows a compositional bias: basic and acidic residues. 276–290 (GPRYCPSIEDKVVRF) contacts NAD(+).

It belongs to the MnmG family. As to quaternary structure, homodimer. Heterotetramer of two MnmE and two MnmG subunits. FAD is required as a cofactor.

It localises to the cytoplasm. NAD-binding protein involved in the addition of a carboxymethylaminomethyl (cmnm) group at the wobble position (U34) of certain tRNAs, forming tRNA-cmnm(5)s(2)U34. The chain is tRNA uridine 5-carboxymethylaminomethyl modification enzyme MnmG from Lactobacillus johnsonii (strain CNCM I-12250 / La1 / NCC 533).